The chain runs to 517 residues: Protein disulfide-isomerase A5 (517 aa).

The N-terminal stretch at 1 to 21 (MARAWGLLLAIGVILPTWLSS) is a signal peptide. 4 disulfide bridges follow: Cys83–Cys92, Cys180–Cys183, Cys303–Cys306, and Cys424–Cys427. Thioredoxin domains follow at residues 132-259 (FLKD…NPQP), 268-382 (PWAD…NPEA), and 376-504 (WMQN…TLRE). A Prevents secretion from ER motif is present at residues 514–517 (REDL).

Belongs to the protein disulfide isomerase family.

It localises to the endoplasmic reticulum lumen. The enzyme catalyses Catalyzes the rearrangement of -S-S- bonds in proteins.. The protein is Protein disulfide-isomerase A5 (Pdia5) of Rattus norvegicus (Rat).